The sequence spans 298 residues: Short-chain dehydrogenase reductase 4 (298 aa).

50 to 74 provides a ligand contact to NAD(+); it reads IITGGASGIGAEAVRLFTDHGAKVV. Serine 182 contacts substrate. Tyrosine 195 serves as the catalytic Proton acceptor.

The protein belongs to the short-chain dehydrogenases/reductases (SDR) family.

The protein is Short-chain dehydrogenase reductase 4 (SDR4) of Arabidopsis thaliana (Mouse-ear cress).